A 445-amino-acid chain; its full sequence is Phosphoglucosamine mutase (445 aa).

Ser102 (phosphoserine intermediate) is an active-site residue. 4 residues coordinate Mg(2+): Ser102, Asp241, Asp243, and Asp245. A Phosphoserine modification is found at Ser102.

Belongs to the phosphohexose mutase family. It depends on Mg(2+) as a cofactor. Activated by phosphorylation.

It catalyses the reaction alpha-D-glucosamine 1-phosphate = D-glucosamine 6-phosphate. In terms of biological role, catalyzes the conversion of glucosamine-6-phosphate to glucosamine-1-phosphate. The polypeptide is Phosphoglucosamine mutase (Shewanella sp. (strain ANA-3)).